A 529-amino-acid polypeptide reads, in one-letter code: Serine/threonine-protein kinase RIO2 (529 aa).

A Protein kinase domain is found at 97–273; sequence VGNQIGIGKE…RDVTCVRTFF (177 aa). K123 contributes to the ATP binding site. The active-site Proton acceptor is D228. Disordered stretches follow at residues 331-366 and 411-452; these read RNRQ…KDHE and EGYK…GHVA. Over residues 337-346 the composition is skewed to acidic residues; sequence DLGEDEDDSD. Residues 411–428 show a composition bias toward basic and acidic residues; it reads EGYKDIELPPEDFKRPAD. Positions 429–447 are enriched in acidic residues; that stretch reads SENDDENDEDEEEGEEEDA.

Belongs to the protein kinase superfamily. RIO-type Ser/Thr kinase family. It depends on Mg(2+) as a cofactor. Expressed in pharynx (metacorpus and posterior bulbus). Expression is restricted to adult stage.

It catalyses the reaction L-seryl-[protein] + ATP = O-phospho-L-seryl-[protein] + ADP + H(+). The enzyme catalyses L-threonyl-[protein] + ATP = O-phospho-L-threonyl-[protein] + ADP + H(+). Required for larval development. In Caenorhabditis elegans, this protein is Serine/threonine-protein kinase RIO2.